Reading from the N-terminus, the 658-residue chain is Exoribonuclease 2 (658 aa).

The RNB domain occupies 189–530 (REDLTSLYFT…VNHRLIKQVL (342 aa)). The 83-residue stretch at 576–658 (AVEFDCEIAD…ETRSIVGNII (83 aa)) folds into the S1 motif domain.

This sequence belongs to the RNR ribonuclease family. RNase II subfamily.

It is found in the cytoplasm. The catalysed reaction is Exonucleolytic cleavage in the 3'- to 5'-direction to yield nucleoside 5'-phosphates.. Functionally, involved in mRNA degradation. Hydrolyzes single-stranded polyribonucleotides processively in the 3' to 5' direction. This chain is Exoribonuclease 2, found in Actinobacillus pleuropneumoniae serotype 5b (strain L20).